Reading from the N-terminus, the 108-residue chain is UPF0060 membrane protein KPN78578_15550 (108 aa).

Helical transmembrane passes span 6-26 (LLFF…WLWL), 29-49 (GATP…VWLL), 61-81 (AAYG…VDGV), and 86-106 (YDWA…AGWG).

It belongs to the UPF0060 family.

It is found in the cell inner membrane. In Klebsiella pneumoniae subsp. pneumoniae (strain ATCC 700721 / MGH 78578), this protein is UPF0060 membrane protein KPN78578_15550.